Reading from the N-terminus, the 1099-residue chain is Solute carrier family 12 member 1 (1099 aa).

The Cytoplasmic portion of the chain corresponds to 1-177 (MSLNNSSNVF…EDDQAGVVKF (177 aa)). Positions 20–23 (RFQV) match the RFXV motif motif. A disordered region spans residues 31-53 (ESSAAADDNTDPPHYEETSFGDE). Ser-61 is subject to Phosphoserine. Ser-91 is subject to Phosphoserine; by OXSR1 and STK39. Residue Thr-95 is modified to Phosphothreonine. Residues Thr-100 and Thr-105 each carry the phosphothreonine; by OXSR1 and STK39 modification. Residue Thr-118 is modified to Phosphothreonine. Ser-120 is subject to Phosphoserine. Phosphoserine; by AMPK is present on Ser-130. At Ser-148 the chain carries Phosphoserine. A helical transmembrane segment spans residues 178-198 (GWVKGVLVRCMLNIWGVMLFI). Topologically, residues 199–201 (RLS) are extracellular. A helical membrane pass occupies residues 202–222 (WIVGEAGIGLGVLIILLSTMV). Residues 223–259 (TSITGLSTSAIATNGFVRGGGAYYLISRSLGPEFGGS) lie on the Cytoplasmic side of the membrane. Residues 260–280 (IGLIFAFANAVAVAMYVVGFA) traverse the membrane as a helical segment. Residues 281-302 (ETVVDLLKESDSMMVDPTNDIR) are Extracellular-facing. A helical transmembrane segment spans residues 303–323 (IIGSITVVILLGISVAGMEWE). Residues 324–327 (AKAQ) lie on the Cytoplasmic side of the membrane. A helical transmembrane segment spans residues 328 to 348 (VILLVILLIAIANFFIGTVIP). Over 349 to 379 (SNNEKKSRGFFNYQASIFAENFGPRFTKGEG) the chain is Extracellular. Residues 380–400 (FFSVFAIFFPAATGILAGANI) traverse the membrane as a helical segment. Over 401–417 (SGDLEDPQDAIPRGTML) the chain is Cytoplasmic. Residues 418–438 (AIFITTVAYLGVAICVGACVV) traverse the membrane as a helical segment. Topologically, residues 439-550 (RDATGNMNDT…NNEPLRGYIL (112 aa)) are extracellular. Residues Asn-446 and Asn-456 are each glycosylated (N-linked (GlcNAc...) asparagine). The next 2 helical transmembrane spans lie at 551–571 (TFLI…APII) and 572–592 (SNFF…ASYA). Residues 593 to 609 (KSPGWRPAYGIYNMWVS) lie on the Extracellular side of the membrane. The chain crosses the membrane as a helical span at residues 610–630 (LFGAVLCCAVMFVINWWAAVI). Residues 631–1099 (TYVIEFFLYV…NHKNVLTFYS (469 aa)) lie on the Cytoplasmic side of the membrane.

Belongs to the SLC12A transporter family. As to quaternary structure, when phosphorylated, interacts with PPP3CB. In terms of processing, phosphorylated at Ser-91, Thr-100 and Thr-105 by OXSR1/OSR1 and STK39/SPAK downstream of WNK kinases (WNK1, WNK2, WNK3 or WNK4), promoting its activity. In terms of tissue distribution, kidney; localizes to the thick ascending limbs (at protein level).

Its subcellular location is the apical cell membrane. It carries out the reaction K(+)(out) + 2 chloride(out) + Na(+)(out) = K(+)(in) + 2 chloride(in) + Na(+)(in). Its activity is regulated as follows. Activated following phosphorylation by OXSR1/OSR1 and STK39/SPAK downstream of WNK kinases (WNK1, WNK2, WNK3 or WNK4). In terms of biological role, renal sodium, potassium and chloride ion cotransporter that mediates the transepithelial NaCl reabsorption in the thick ascending limb and plays an essential role in the urinary concentration and volume regulation. Electrically silent transporter system. The sequence is that of Solute carrier family 12 member 1 (SLC12A1) from Homo sapiens (Human).